Reading from the N-terminus, the 340-residue chain is UDP-N-acetylenolpyruvoylglucosamine reductase (340 aa).

An FAD-binding PCMH-type domain is found at 14-185; the sequence is HVEATARWLL…VAVEFNLPLL (172 aa). Arg162 is an active-site residue. Ser235 acts as the Proton donor in catalysis. Glu332 is an active-site residue.

It belongs to the MurB family. FAD is required as a cofactor.

It localises to the cytoplasm. The catalysed reaction is UDP-N-acetyl-alpha-D-muramate + NADP(+) = UDP-N-acetyl-3-O-(1-carboxyvinyl)-alpha-D-glucosamine + NADPH + H(+). It functions in the pathway cell wall biogenesis; peptidoglycan biosynthesis. In terms of biological role, cell wall formation. The protein is UDP-N-acetylenolpyruvoylglucosamine reductase of Xanthomonas oryzae pv. oryzae (strain KACC10331 / KXO85).